A 509-amino-acid chain; its full sequence is Photosystem II CP47 reaction center protein (509 aa).

A run of 6 helical transmembrane segments spans residues 21–36 (AVHL…WAGS), 101–115 (IVLS…IWHW), 140–156 (GIHL…FGAF), 203–218 (IAAG…FHLT), 237–252 (VLSS…AFIT), and 457–472 (NFAL…HGSR).

It belongs to the PsbB/PsbC family. PsbB subfamily. In terms of assembly, PSII is composed of 1 copy each of membrane proteins PsbA, PsbB, PsbC, PsbD, PsbE, PsbF, PsbH, PsbI, PsbJ, PsbK, PsbL, PsbM, PsbT, PsbX, PsbY, PsbZ, Psb30/Ycf12, at least 3 peripheral proteins of the oxygen-evolving complex and a large number of cofactors. It forms dimeric complexes. Requires Binds multiple chlorophylls. PSII binds additional chlorophylls, carotenoids and specific lipids. as cofactor.

It is found in the plastid. Its subcellular location is the chloroplast thylakoid membrane. One of the components of the core complex of photosystem II (PSII). It binds chlorophyll and helps catalyze the primary light-induced photochemical processes of PSII. PSII is a light-driven water:plastoquinone oxidoreductase, using light energy to abstract electrons from H(2)O, generating O(2) and a proton gradient subsequently used for ATP formation. The polypeptide is Photosystem II CP47 reaction center protein (Porphyra purpurea (Red seaweed)).